The following is a 200-amino-acid chain: Recombination protein RecR (200 aa).

Residues 58-73 form a C4-type zinc finger; that stretch reads CSICGNITEDDPCPIC. One can recognise a Toprim domain in the interval 81-177; sequence SQILVVEQSQ…KVTRLAHGLS (97 aa).

It belongs to the RecR family.

In terms of biological role, may play a role in DNA repair. It seems to be involved in an RecBC-independent recombinational process of DNA repair. It may act with RecF and RecO. The chain is Recombination protein RecR from Limosilactobacillus reuteri (strain DSM 20016) (Lactobacillus reuteri).